The sequence spans 230 residues: Lactate utilization protein C (230 aa).

It belongs to the LutC/YkgG family.

In terms of biological role, is involved in L-lactate degradation and allows cells to grow with lactate as the sole carbon source. In Exiguobacterium sp. (strain ATCC BAA-1283 / AT1b), this protein is Lactate utilization protein C.